A 402-amino-acid chain; its full sequence is Putative F-box protein At3g23960 (402 aa).

Residues 1-23 are disordered; that stretch reads MRSRQLHNVSEDRETLSRRNKRS. The F-box domain occupies 26-73; sequence SLNGHIPIDLLIEIFLKLPVKSIATCRSVSKFWTYVLGRQDFTELFLT.

The polypeptide is Putative F-box protein At3g23960 (Arabidopsis thaliana (Mouse-ear cress)).